We begin with the raw amino-acid sequence, 411 residues long: Protein phosphatase 1 regulatory subunit 36 (411 aa).

As to quaternary structure, interacts with PPP1CA.

Its function is as follows. Inhibits phosphatase activity of protein phosphatase 1 (PP1) complexes. The sequence is that of Protein phosphatase 1 regulatory subunit 36 (Ppp1r36) from Rattus norvegicus (Rat).